Here is a 296-residue protein sequence, read N- to C-terminus: Decaprenyl diphosphate synthase (296 aa).

The disordered stretch occupies residues 1–24 (MARDARKRTSSNFPQLPPAPDDYP). Asp76 is an active-site residue. Residue Asp76 participates in Mg(2+) binding. Substrate is bound by residues 76–80 (DGNGR), Trp81, Arg89, His93, 121–124 (STEN), Trp125, Arg127, Arg168, Arg244, and 250–252 (RSS). The active-site Proton acceptor is the Asn124. Position 263 (Glu263) interacts with Mg(2+). 292–294 (RFG) contacts substrate.

Belongs to the UPP synthase family. Homodimer. The cofactor is Mg(2+). Mn(2+) serves as cofactor.

The protein localises to the cell membrane. It carries out the reaction (2Z,6E)-farnesyl diphosphate + 7 isopentenyl diphosphate = (2Z,6Z,10Z,14Z,18Z,22Z,26Z,30Z,34E)-decaprenyl diphosphate + 7 diphosphate. The enzyme catalyses n isopentenyl diphosphate + (2E,6E)-farnesyl diphosphate = a di-trans,poly-cis-polyprenyl diphosphate + n diphosphate. Its activity is regulated as follows. Activated by dithiothreitol and inhibited by EDTA. Functionally, catalyzes the sequential condensation of isopentenyl diphosphate (IPP) in the cis configuration with (2Z,6E)-farnesyl diphosphate (Z-FPP or EZ-FPP) generating the 50 carbon product trans,polycis-decaprenyl diphosphate. When (2E,6E)-farnesyl diphosphate (E-FPP or EE-FPP) is used in vitro, both primary products decaprenyl diphosphate and (2E,6E,10E)-geranylgeranyl diphosphate (EEE-GGPP) are synthesized. M.tuberculosis does not synthesize (2E,6E,10Z)-geranylgeranyl diphosphate (EEZ-GGPP) and heptaprenyl diphosphate. Can also accept many different allylic substrates, including E-geranyl diphosphate (E-GPP), neryl diphosphate (NPP), and all-trans-geranyl-geranyl diphosphate. This chain is Decaprenyl diphosphate synthase (uppS), found in Mycobacterium tuberculosis (strain ATCC 25618 / H37Rv).